The following is a 149-amino-acid chain: UPF0179 protein MM_0589 (149 aa).

Belongs to the UPF0179 family.

The sequence is that of UPF0179 protein MM_0589 from Methanosarcina mazei (strain ATCC BAA-159 / DSM 3647 / Goe1 / Go1 / JCM 11833 / OCM 88) (Methanosarcina frisia).